Consider the following 138-residue polypeptide: MSETSEQDARNLAAQHRELQQNAESVNQQLGMVQMSIEDCTRAILTLEELKSASGAINTMIPLGAGALIHANIADVDKIVVSVGAGISVEKTPTEAIETLTQRKEELGKVVERLNGTLTQIGQRLASIESAVGNRPPQ.

The protein belongs to the prefoldin subunit alpha family. As to quaternary structure, heterohexamer of two alpha and four beta subunits.

Its subcellular location is the cytoplasm. Its function is as follows. Molecular chaperone capable of stabilizing a range of proteins. Seems to fulfill an ATP-independent, HSP70-like function in archaeal de novo protein folding. In Methanococcoides burtonii (strain DSM 6242 / NBRC 107633 / OCM 468 / ACE-M), this protein is Prefoldin subunit alpha.